A 190-amino-acid polypeptide reads, in one-letter code: MSQPRPGHRPDCNGADPDSNFASMTHSARPFTEVVIEADCWQAEASAEATVLRAIETAADAVDADTGGAELAVMLTDDDHIRQLNASFRGKDKPTNVLSFPAAQPEVQPDGAPRMLGDIAIAYQTVRREADDEGKPFDHHLSHLAVHGFLHLVGYDHETEEEAEEMEDAERAILARLGIPDPYAGQDRVS.

The segment at 1–25 (MSQPRPGHRPDCNGADPDSNFASMT) is disordered. Zn(2+) is bound by residues histidine 147, histidine 151, and histidine 157.

This sequence belongs to the endoribonuclease YbeY family. Zn(2+) is required as a cofactor.

Its subcellular location is the cytoplasm. Its function is as follows. Single strand-specific metallo-endoribonuclease involved in late-stage 70S ribosome quality control and in maturation of the 3' terminus of the 16S rRNA. This chain is Endoribonuclease YbeY, found in Rhodopseudomonas palustris (strain ATCC BAA-98 / CGA009).